Here is a 432-residue protein sequence, read N- to C-terminus: Transcriptional adapter 3 (432 aa).

Lys21 participates in a covalent cross-link: Glycyl lysine isopeptide (Lys-Gly) (interchain with G-Cter in SUMO2). Residues 40–69 (IEELDTLQLELETLLSSASRRLRVLEAETQ) adopt a coiled-coil conformation. Residues 87–127 (ARDHELGAPPKHGKPKKQKLEGKTGHGPGPGPGRPKSKNVQ) form a disordered region. Lys129 is covalently cross-linked (Glycyl lysine isopeptide (Lys-Gly) (interchain with G-Cter in SUMO2)). The tract at residues 272 to 319 (NIISPMEDSPIPDMSGKESGADGASTSPRNQNKPFSVPHTKSLESRIK) is disordered. Phosphoserine occurs at positions 280 and 298. A compositionally biased stretch (polar residues) spans 295-305 (ASTSPRNQNKP). Residues 367–407 (LLRLAKEEVSRQELRQRVRMADNEVMDAFRKIMAARQKKRT) adopt a coiled-coil conformation. Residue Lys418 is modified to N6-acetyllysine.

Belongs to the NGG1 family. The PCAF complex is composed of a number of TBP-associated factors (TAFS), such as TAF5, TAF5L, TAF6, TAF6L, TAF9, TAF10 and TAF12, PCAF, and also PCAF-associated factors (PAFs), such as TADA2L/ADA2, TADA3L/ADA3 and SPT3. Interacts directly with TADA2L and PCAF and also with the high-risk HPV oncoprotein E6. Component of the STAGA transcription coactivator-HAT complex, at least composed of SUPT3H, GCN5L2, TAF5L, TAF6L, SUPT7L, TADA3L, TAD1L, TAF10, TAF12, TRRAP and TAF9. Component of the TFTC-HAT complex. Component of the ADA2A-containing complex (ATAC), composed of KAT14, KAT2A, TADA2L, TADA3L, ZZ3, MBIP, WDR5, YEATS2, CCDC101 and DR1.

It is found in the nucleus. Its function is as follows. Functions as a component of the PCAF complex. The PCAF complex is capable of efficiently acetylating histones in a nucleosomal context. The PCAF complex could be considered as the human version of the yeast SAGA complex. Also known as a coactivator for p53/TP53-dependent transcriptional activation. Component of the ATAC complex, a complex with histone acetyltransferase activity on histones H3 and H4. The polypeptide is Transcriptional adapter 3 (Tada3) (Rattus norvegicus (Rat)).